Here is a 159-residue protein sequence, read N- to C-terminus: 3-hydroxyacyl-[acyl-carrier-protein] dehydratase FabZ (159 aa).

His-58 is an active-site residue.

Belongs to the thioester dehydratase family. FabZ subfamily.

The protein localises to the cytoplasm. The catalysed reaction is a (3R)-hydroxyacyl-[ACP] = a (2E)-enoyl-[ACP] + H2O. Its function is as follows. Involved in unsaturated fatty acids biosynthesis. Catalyzes the dehydration of short chain beta-hydroxyacyl-ACPs and long chain saturated and unsaturated beta-hydroxyacyl-ACPs. The sequence is that of 3-hydroxyacyl-[acyl-carrier-protein] dehydratase FabZ from Helicobacter pylori (strain G27).